Reading from the N-terminus, the 64-residue chain is Large ribosomal subunit protein bL32 (64 aa).

The tract at residues 1 to 64 (MAVQQNRKTR…APKHGDETEE (64 aa)) is disordered. The segment covering 7–16 (RKTRSKRGMR) has biased composition (basic residues).

The protein belongs to the bacterial ribosomal protein bL32 family.

This is Large ribosomal subunit protein bL32 from Methylococcus capsulatus (strain ATCC 33009 / NCIMB 11132 / Bath).